A 282-amino-acid polypeptide reads, in one-letter code: Ribosomal protein L11 methyltransferase (282 aa).

The S-adenosyl-L-methionine site is built by T133, G154, D175, and N216.

This sequence belongs to the methyltransferase superfamily. PrmA family.

The protein resides in the cytoplasm. It carries out the reaction L-lysyl-[protein] + 3 S-adenosyl-L-methionine = N(6),N(6),N(6)-trimethyl-L-lysyl-[protein] + 3 S-adenosyl-L-homocysteine + 3 H(+). In terms of biological role, methylates ribosomal protein L11. This is Ribosomal protein L11 methyltransferase from Campylobacter jejuni subsp. doylei (strain ATCC BAA-1458 / RM4099 / 269.97).